A 60-amino-acid chain; its full sequence is Large ribosomal subunit protein bL32 (60 aa).

This sequence belongs to the bacterial ribosomal protein bL32 family.

This is Large ribosomal subunit protein bL32 from Streptococcus pneumoniae serotype 19F (strain G54).